The primary structure comprises 365 residues: UDP-N-acetylglucosamine--N-acetylmuramyl-(pentapeptide) pyrophosphoryl-undecaprenol N-acetylglucosamine transferase (365 aa).

Residues 19-21, asparagine 131, arginine 170, serine 201, isoleucine 255, 274-279, and glutamine 300 each bind UDP-N-acetyl-alpha-D-glucosamine; these read TGG and ALTVTE.

Belongs to the glycosyltransferase 28 family. MurG subfamily.

It localises to the cell inner membrane. It catalyses the reaction di-trans,octa-cis-undecaprenyl diphospho-N-acetyl-alpha-D-muramoyl-L-alanyl-D-glutamyl-meso-2,6-diaminopimeloyl-D-alanyl-D-alanine + UDP-N-acetyl-alpha-D-glucosamine = di-trans,octa-cis-undecaprenyl diphospho-[N-acetyl-alpha-D-glucosaminyl-(1-&gt;4)]-N-acetyl-alpha-D-muramoyl-L-alanyl-D-glutamyl-meso-2,6-diaminopimeloyl-D-alanyl-D-alanine + UDP + H(+). It functions in the pathway cell wall biogenesis; peptidoglycan biosynthesis. Functionally, cell wall formation. Catalyzes the transfer of a GlcNAc subunit on undecaprenyl-pyrophosphoryl-MurNAc-pentapeptide (lipid intermediate I) to form undecaprenyl-pyrophosphoryl-MurNAc-(pentapeptide)GlcNAc (lipid intermediate II). This Acinetobacter baumannii (strain ATCC 17978 / DSM 105126 / CIP 53.77 / LMG 1025 / NCDC KC755 / 5377) protein is UDP-N-acetylglucosamine--N-acetylmuramyl-(pentapeptide) pyrophosphoryl-undecaprenol N-acetylglucosamine transferase.